Consider the following 138-residue polypeptide: PTS system sorbose-specific EIIA component (138 aa).

Positions 1-125 constitute a PTS EIIA type-4 domain; that stretch reads MEIILVGHAH…KIKEEFSTSL (125 aa). Catalysis depends on H8, which acts as the Tele-phosphohistidine intermediate. Phosphohistidine; by HPr is present on H8.

It localises to the cytoplasm. In terms of biological role, the phosphoenolpyruvate-dependent sugar phosphotransferase system (PTS), a major carbohydrate active transport system, catalyzes the phosphorylation of incoming sugar substrates concomitant with their translocation across the cell membrane. The enzyme II SorABCD PTS system is involved in L-sorbose transport. The chain is PTS system sorbose-specific EIIA component from Lacticaseibacillus casei (Lactobacillus casei).